Here is a 308-residue protein sequence, read N- to C-terminus: MARTDNDTWDLASSVGATATMVAAARAVATRAPDAVIDDPFAEPLVRAVGVDFFTRLATGDLTPTDLDPDATGGAGNMDRFADGMAARTRFFDDFFSDAADAGVRQAVILASGLDSRAYRLPWPAGTVVFEIDQPGVITFKSDTLARLGAKPTAVHRTVPVDLRDDWIGALEAAGFDRTEPSAWIAEGLFGYLPPEAQDRLLDQITELSPPGSRLAVEGVVSSPDADDEQIRERMQAVRDQWRQFGFDLDFSELVYTGERAEVAAYLGDRGWRTDSITATALLEKCGLQSAEDSSANFADVRYVTAVK.

Residues Asp133 and 162–163 (DL) contribute to the S-adenosyl-L-methionine site.

Belongs to the UPF0677 family.

Functionally, exhibits S-adenosyl-L-methionine-dependent methyltransferase activity. The sequence is that of Putative S-adenosyl-L-methionine-dependent methyltransferase Mmcs_1045 from Mycobacterium sp. (strain MCS).